We begin with the raw amino-acid sequence, 452 residues long: Transcription factor AP-2-delta (452 aa).

S239 carries the post-translational modification Phosphoserine; by PKA. The interval 280–410 (RRKAANVTLL…VLSEMLNYLE (131 aa)) is H-S-H (helix-span-helix), dimerization. The interval 416–452 (KNGGAADSGQGHANSEKAPLRKASEAAVKEGKTEKTD) is disordered. Residues 429–452 (NSEKAPLRKASEAAVKEGKTEKTD) show a composition bias toward basic and acidic residues.

Belongs to the AP-2 family. In terms of assembly, binds DNA as a dimer. Can form homodimers or heterodimers with other AP-2 family members. Expressed in both embryonic and newborn brain.

It is found in the nucleus. Functionally, sequence-specific DNA-binding protein that interacts with inducible viral and cellular enhancer elements to regulate transcription of selected genes. AP-2 factors bind to the consensus sequence 5'-GCCNNNGGC-3' and activate genes involved in a large spectrum of important biological functions including proper eye, face, body wall, limb and neural tube development. They also suppress a number of genes including MCAM/MUC18, C/EBP alpha and MYC. The chain is Transcription factor AP-2-delta (Tfap2d) from Mus musculus (Mouse).